Reading from the N-terminus, the 137-residue chain is Large ribosomal subunit protein uL16c (137 aa).

It belongs to the universal ribosomal protein uL16 family. Part of the 50S ribosomal subunit.

It localises to the plastid. It is found in the chloroplast. This chain is Large ribosomal subunit protein uL16c, found in Rhodomonas salina (Cryptomonas salina).